A 1593-amino-acid polypeptide reads, in one-letter code: Nischarin (1593 aa).

The tract at residues 1 to 134 (MAAATLSFGP…GVTAALAEEL (134 aa)) is necessary for binding to phosphoinositide-3-P; not sufficient for targeting to endosomes. The PX domain maps to 12 to 122 (REAEPAKEAR…AHFLHFHLYE (111 aa)). Positions 121-695 (YEVNGVTAAL…ERLALEWALG (575 aa)) are necessary for homooligomerization and targeting to endosomes. The segment at 246–869 (MSVRFSATSM…LVYSDKRMVQ (624 aa)) is interaction with PAK1. LRR repeat units follow at residues 290–311 (ALTTLDLSHNSICEIDESVKLI), 313–334 (KIEYLDLSHNGLRVVDNLQHLY), 335–356 (NLVHLDLSYNKLSSLEGVHTKL), 358–379 (NVKTLNLAGNFLESLSGLHKLY), 380–401 (SLVNVDLRDNRIEQLDEVKSIG), and 405–426 (CLERLTLLNNPLSIIPDYRTKV). Residues 466–480 (SKLSNTEKKAGEDFR) show a composition bias toward basic and acidic residues. A disordered region spans residues 466–499 (SKLSNTEKKAGEDFRLPPAPCIRPGGSPPAAPAS). Residues 482–496 (PPAPCIRPGGSPPAA) are compositionally biased toward pro residues. Phosphoserine occurs at positions 543, 545, and 548. Residues 624–694 (IEAANQREEA…EERLALEWAL (71 aa)) are a coiled coil. A disordered region spans residues 629–687 (QREEAHGEQGEEEEEEEEEEDVAENRYFEMGPPDAEEEEGSGQGEEDEEDEDEEAEEER). Composition is skewed to acidic residues over residues 638 to 650 (GEEEEEEEEEEDV) and 662 to 685 (DAEEEEGSGQGEEDEEDEDEEAEE). The interval 661–869 (PDAEEEEGSG…LVYSDKRMVQ (209 aa)) is interaction with LIMK. The segment at 709-807 (KVLWCFLIHV…ANLHEFHADL (99 aa)) is interaction with ITGA5. The disordered stretch occupies residues 1016-1185 (NPSAKPRNQP…PAGGPAPAEA (170 aa)). Composition is skewed to low complexity over residues 1038-1069 (ETPADAPAPAAVPPTASAPAPAEALAPDLAPV) and 1081-1158 (AEAP…APAP). Tandem repeats lie at residues 1081–1086 (AEAPAA), 1087–1092 (AEAPAA), 1093–1098 (AEAPAA), 1099–1104 (AEAPAA), 1105–1110 (AEAPAA), 1111–1116 (AEAPAA), 1123–1128 (AEAPAA), 1129–1134 (AEAPAA), 1135–1140 (AEAPAA), and 1141–1146 (AEAPAA). The interval 1081 to 1146 (AEAPAAAEAP…APAAAEAPAA (66 aa)) is 10 X 6 AA tandem repeat of A-E-A-P-A-A. The segment covering 1159 to 1179 (NQAPAPARGPAPARGPAPAGG) has biased composition (pro residues). Position 1371 is a phosphothreonine (Thr1371). At Ser1373 the chain carries Phosphoserine.

As to quaternary structure, homooligomer. Interacts with GRB2. Interacts with PIK3R1; probably associates with the PI3-kinase complex. Interacts with IRS4. Found in a complex with ITGA5 and PAK1. Found in a complex with LIMK1 and PAK1. Interacts with ITGA5 (via cytoplasmic domain); this interaction is direct. Interacts with PAK1 (via kinase domain); this interaction is direct and is increased upon activation of PAK1. Interacts with LIMK1 (via PDZ and kinase domain); this interaction is direct. Interacts with LIMK2; this interaction depends on LIMK2 activity. Interacts with RAC1 (activated state). Interacts with STK11; this interaction may increase STK11 activity. Highly expressed in brain and kidney. Moderately expressed in heart, liver, lung and skeletal muscle. Not detected in spleen and testis.

It localises to the cell membrane. It is found in the cytoplasm. Its subcellular location is the early endosome. The protein localises to the recycling endosome. Functionally, acts either as the functional imidazoline-1 receptor (I1R) candidate or as a membrane-associated mediator of the I1R signaling. Binds numerous imidazoline ligands that induces initiation of cell-signaling cascades triggering to cell survival, growth and migration. Its activation by the agonist rilmenidine induces an increase in phosphorylation of mitogen-activated protein kinases MAPK1 and MAPK3 in rostral ventrolateral medulla (RVLM) neurons that exhibited rilmenidine-evoked hypotension. Blocking its activation with efaroxan abolished rilmenidine-induced mitogen-activated protein kinase phosphorylation in RVLM neurons. Acts as a modulator of Rac-regulated signal transduction pathways. Suppresses Rac1-stimulated cell migration by interacting with PAK1 and inhibiting its kinase activity. Also blocks Pak-independent Rac signaling by interacting with RAC1 and inhibiting Rac1-stimulated NF-kB response element and cyclin D1 promoter activation. Also inhibits LIMK1 kinase activity by reducing LIMK1 'Tyr-508' phosphorylation. Inhibits Rac-induced cell migration and invasion in breast and colon epithelial cells. Inhibits lamellipodia formation, when overexpressed. Plays a role in protection against apoptosis. Involved in association with IRS4 in the enhancement of insulin activation of MAPK1 and MAPK3. When overexpressed, induces a redistribution of cell surface ITGA5 integrin to intracellular endosomal structures. This Mus musculus (Mouse) protein is Nischarin (Nisch).